The primary structure comprises 285 residues: Bifunctional protein FolD (285 aa).

Residues 165-167 (GRS) and serine 190 each bind NADP(+).

Belongs to the tetrahydrofolate dehydrogenase/cyclohydrolase family. Homodimer.

The enzyme catalyses (6R)-5,10-methylene-5,6,7,8-tetrahydrofolate + NADP(+) = (6R)-5,10-methenyltetrahydrofolate + NADPH. It carries out the reaction (6R)-5,10-methenyltetrahydrofolate + H2O = (6R)-10-formyltetrahydrofolate + H(+). It functions in the pathway one-carbon metabolism; tetrahydrofolate interconversion. Functionally, catalyzes the oxidation of 5,10-methylenetetrahydrofolate to 5,10-methenyltetrahydrofolate and then the hydrolysis of 5,10-methenyltetrahydrofolate to 10-formyltetrahydrofolate. The sequence is that of Bifunctional protein FolD from Staphylococcus carnosus (strain TM300).